Here is a 129-residue protein sequence, read N- to C-terminus: Small ribosomal subunit protein uS11 (129 aa).

It belongs to the universal ribosomal protein uS11 family. Part of the 30S ribosomal subunit. Interacts with proteins S7 and S18. Binds to IF-3.

In terms of biological role, located on the platform of the 30S subunit, it bridges several disparate RNA helices of the 16S rRNA. Forms part of the Shine-Dalgarno cleft in the 70S ribosome. This Hahella chejuensis (strain KCTC 2396) protein is Small ribosomal subunit protein uS11.